Consider the following 495-residue polypeptide: MGRKKIQITRIMDERNRQVTFTKRKFGLMKKAYELSVLCDCEIALIIFNSSNKLFQYASTDMDKVLLKYTEYNEPHESRTNSDIVEALNKKEHRGCDSPDPDTSYVLTPHTEEKYKKINEEFDNMMRNHKIAPGLPPQNFSMSVTVPVTSPNALSYTNPGSSLVSPSLAASSTLAESSMLSPPPATLHRNVSPGAPQRPPSTGSAGGMLSTTDLTVPNGAGNGPVGNGFVDSRASPNLIGNTGANSVGKVMPTKSPPPPGGGSVGMNSRKPDLRVVIPPSSKGMMPPLNAQRISSSQATQPLATPVVSVTTPSLPPQGLVYSAMPTAYNTDYSLTSADLSALQGFTSPGMLSLGQASAWQQHHLGQAALSSLVAGGQLSQGSNLSINTNQNINIKTEPISPPRDRMTPSGFQQQQQQQPQQQPPPQPPQPQPQPRQEMGRSPVDSLSSSSSSYDGSDREDPRGDFHSPIVLGRPPNAEDRESPSVKRMRMDTWVT.

An MADS-box domain is found at 3 to 57; that stretch reads RKKIQITRIMDERNRQVTFTKRKFGLMKKAYELSVLCDCEIALIIFNSSNKLFQY. The mef2-type DNA-binding region spans 58-86; that stretch reads ASTDMDKVLLKYTEYNEPHESRTNSDIVE. Serine 59 carries the post-translational modification Phosphoserine; by CK2. At serine 98 the chain carries Phosphoserine. The disordered stretch occupies residues 175–225; sequence AESSMLSPPPATLHRNVSPGAPQRPPSTGSAGGMLSTTDLTVPNGAGNGPV. Serine 235 carries the post-translational modification Phosphoserine. Residues 242 to 271 are disordered; sequence TGANSVGKVMPTKSPPPPGGGSVGMNSRKP. At lysine 249 the chain carries N6-acetyllysine. Serine 255 is modified (phosphoserine). The required for interaction with MAPKs stretch occupies residues 266-283; it reads MNSRKPDLRVVIPPSSKG. A phosphothreonine; by MAPK7 and MAPK14 mark is found at threonine 304 and threonine 311. Residue serine 347 is modified to Phosphoserine; by MAPK7. Polar residues predominate over residues 382-394; the sequence is SNLSINTNQNINI. The segment at 382-495 is disordered; it reads SNLSINTNQN…KRMRMDTWVT (114 aa). Lysine 395 carries the N6-acetyllysine; alternate modification. Residue lysine 395 forms a Glycyl lysine isopeptide (Lys-Gly) (interchain with G-Cter in SUMO); alternate linkage. Serine 400 carries the phosphoserine; by CDK5 modification. At threonine 407 the chain carries Phosphothreonine. Residues 421–433 are compositionally biased toward pro residues; it reads QQPPPQPPQPQPQ. Serine 441 carries the phosphoserine modification. Low complexity predominate over residues 441 to 454; it reads SPVDSLSSSSSSYD. Basic and acidic residues-rich tracts occupy residues 455 to 465 and 476 to 495; these read GSDREDPRGDF and NAEDRESPSVKRMRMDTWVT.

As to quaternary structure, binds DNA as a homo- or heterodimer. Dimerizes with MEF2D. Interacts with HDAC7. Interacts with PIAS1; the interaction enhances sumoylation. Interacts with HDAC4, HDAC9 and SLC2A4RG. Interacts (via the N-terminal) with MAPK7; the interaction results in the phosphorylation and transcriptional activity of MEF2A. In terms of processing, constitutive phosphorylation on Ser-400 promotes Lys-395 sumoylation thus preventing acetylation at this site. Dephosphorylation on Ser-400 by PPP3CA upon neuron depolarization promotes a switch from sumoylation to acetylation on residue Lys-395 leading to inhibition of dendrite claw differentiation. Phosphorylation on Thr-304 and Thr-311 are the main sites involved in p38 MAPK signaling and activate transcription. Phosphorylated on these sites by MAPK14/p38alpha and MAPK11/p38beta, but not by MAPK13/p38delta nor by MAPK12/p38gamma. Phosphorylation on Ser-400 by CDK5 induced by neurotoxicity inhibits MEF2A transcriptional activation leading to apoptosis of cortical neurons. Phosphorylation on Thr-304, Thr-311 and Ser-347 can be induced by EGF. Sumoylation on Lys-395 is enhanced by PIAS1 and represses transcriptional activity. Phosphorylation on Ser-400 is required for sumoylation. Has no effect on nuclear location nor on DNA binding. Sumoylated with SUMO1 and, to a lesser extent with SUMO2 and SUMO3. PIASx facilitates sumoylation in postsynaptic dendrites in the cerebellar cortex and promotes their morphogenesis. Post-translationally, acetylation on Lys-395 activates transcriptional activity. Acetylated by p300 on several sites in diffentiating myocytes. Acetylation on Lys-4 increases DNA binding and transactivation. Hyperacetylation by p300 leads to enhanced cardiac myocyte growth and heart failure. In terms of processing, proteolytically cleaved in cerebellar granule neurons on several sites by caspase 3 and caspase 7 following neurotoxicity. Preferentially cleaves the CDK5-mediated hyperphosphorylated form which leads to neuron apoptosis and transcriptional inactivation.

It localises to the nucleus. In terms of biological role, transcriptional activator which binds specifically to the MEF2 element, 5'-YTA[AT](4)TAR-3', found in numerous muscle-specific genes. Also involved in the activation of numerous growth factor- and stress-induced genes. Mediates cellular functions not only in skeletal and cardiac muscle development, but also in neuronal differentiation and survival. Plays diverse roles in the control of cell growth, survival and apoptosis via p38 MAPK signaling in muscle-specific and/or growth factor-related transcription. In cerebellar granule neurons, phosphorylated and sumoylated MEF2A represses transcription of NUR77 promoting synaptic differentiation. Associates with chromatin to the ZNF16 promoter. This Rattus norvegicus (Rat) protein is Myocyte-specific enhancer factor 2A (Mef2a).